The sequence spans 441 residues: UPF0761 membrane protein RSc1559 (441 aa).

6 consecutive transmembrane segments (helical) span residues 44–64 (VLSL…FPMF), 101–121 (GLTA…MLTV), 141–161 (VLVF…SLSV), 182–202 (VVVG…LYVF), 207–227 (LVAW…FEIA), and 248–268 (FAAL…TLLG).

It belongs to the UPF0761 family.

Its subcellular location is the cell inner membrane. The chain is UPF0761 membrane protein RSc1559 from Ralstonia nicotianae (strain ATCC BAA-1114 / GMI1000) (Ralstonia solanacearum).